The primary structure comprises 314 residues: Olfactory receptor 5P62 (314 aa).

Residues 1–28 (MAFIYNGSQTTVTEFILLGLTDDPVLKV) are Extracellular-facing. N-linked (GlcNAc...) asparagine glycosylation is present at Asn6. The chain crosses the membrane as a helical span at residues 29 to 49 (ILFCIILCIYLVTVFGNLSTI). The Cytoplasmic portion of the chain corresponds to 50 to 57 (LLIGVSSK). A helical membrane pass occupies residues 58-78 (LHHPMYFFLSHLASVDMGLSS). Topologically, residues 79-102 (SVTPNMLVNFLTEKNTISYLGCGI) are extracellular. Cys100 and Cys192 are disulfide-bonded. A helical membrane pass occupies residues 103–123 (QLSSAAFFGAVEFFLLAAMAY). The Cytoplasmic portion of the chain corresponds to 124–136 (DRLVAICNPLLYS). Residues 137 to 157 (TKMSSQVCIQLVAGSYVGGFL) form a helical membrane-spanning segment. Topologically, residues 158-199 (NASFVTHFFFSFLFCGPNRVNHFFCDLSPMMELSCSDVSISE) are extracellular. Residues 200–220 (IVISFSAGSFTMTTLFVIVIP) form a helical membrane-spanning segment. The Cytoplasmic portion of the chain corresponds to 221–240 (YFYIFITILKIRSTEGRQKA). A helical transmembrane segment spans residues 241–261 (FSTCTSHLTAVTLYYGTIIFI). Residues 262 to 274 (YVMPKSTYSRDQN) lie on the Extracellular side of the membrane. Residues 275–295 (KVVSLFYMLVIPVLNPLIYSL) form a helical membrane-spanning segment. The Cytoplasmic portion of the chain corresponds to 296 to 314 (RNNEIKDALKRQFYRKTLL).

It belongs to the G-protein coupled receptor 1 family.

The protein localises to the cell membrane. Functionally, potential odorant receptor. The polypeptide is Olfactory receptor 5P62 (Mus musculus (Mouse)).